The sequence spans 173 residues: Translation initiation factor IF-3 (173 aa).

Belongs to the IF-3 family. Monomer.

The protein localises to the cytoplasm. Functionally, IF-3 binds to the 30S ribosomal subunit and shifts the equilibrium between 70S ribosomes and their 50S and 30S subunits in favor of the free subunits, thus enhancing the availability of 30S subunits on which protein synthesis initiation begins. The polypeptide is Translation initiation factor IF-3 (Parvibaculum lavamentivorans (strain DS-1 / DSM 13023 / NCIMB 13966)).